A 453-amino-acid polypeptide reads, in one-letter code: Glucose N-acetyltransferase 1-B (453 aa).

Over 1-8 (MLKRKVRY) the chain is Cytoplasmic. Residues 9 to 29 (LLLIVVVFTGIILSVEAIMRF) form a helical; Signal-anchor for type II membrane protein membrane-spanning segment. Over 30–453 (QLNKNVDYYL…LESRAICQVN (424 aa)) the chain is Lumenal. N-linked (GlcNAc...) asparagine glycans are attached at residues Asn108, Asn126, and Asn176. The DXD motif lies at 187–189 (DND).

The protein belongs to the GNT1 family.

The protein resides in the golgi apparatus membrane. The protein localises to the vacuole membrane. N-acetylglucosaminyltransferase involved in the Golgi-specific modification of N-linked glycans. The sequence is that of Glucose N-acetyltransferase 1-B (GNT1-B) from Kluyveromyces lactis (strain ATCC 8585 / CBS 2359 / DSM 70799 / NBRC 1267 / NRRL Y-1140 / WM37) (Yeast).